The chain runs to 202 residues: Urease accessory protein UreG (202 aa).

11-18 is a GTP binding site; sequence GPVGSGKT.

The protein belongs to the SIMIBI class G3E GTPase family. UreG subfamily. As to quaternary structure, homodimer. UreD, UreF and UreG form a complex that acts as a GTP-hydrolysis-dependent molecular chaperone, activating the urease apoprotein by helping to assemble the nickel containing metallocenter of UreC. The UreE protein probably delivers the nickel.

It is found in the cytoplasm. In terms of biological role, facilitates the functional incorporation of the urease nickel metallocenter. This process requires GTP hydrolysis, probably effectuated by UreG. This is Urease accessory protein UreG from Prochlorococcus marinus (strain MIT 9313).